The chain runs to 686 residues: Secretin GspD 2 (686 aa).

An N-terminal signal peptide occupies residues 1 to 40 (MFWRDITLSVWRKKTTGLKTKKRLLPLVLAAALCSSPVWA). Residues 41–140 (EEATFTANFK…VGEGSDNYAG (100 aa)) are N0, contacts GspC2. The segment at 142-206 (EMVTKVVPVR…EVIQRVDHAG (65 aa)) is N1. Positions 207–279 (NRTEEVIPLD…LIRRLDSEME (73 aa)) are N2. Residues 282–357 (GNSQVFYLKY…SLQSVIEQLD (76 aa)) form an N3 region. The interval 360-627 (RAQVHVEALI…VFIRPTILRD (268 aa)) is secretin. Positions 414-433 (PQKGSTVISENGATTINPDT) are cap gate. The segment at 629–686 (MAADGVSQRKYNYMRAEQIYRDEQGLSLMPHTAQPVLPAQNQALPPEVRAFLNAGRTR) is s domain, contacts AspS2.

It belongs to the bacterial secretin family. GSP D subfamily. In terms of assembly, forms a cylindrical channel with 15 subunits, each of which interacts with the surrounding pilotin AspS2 proteins (also called GspS-beta). Interacts with inner cell membrane protein GspC2 in the periplasm. Forms multimers in the outer membrane. The isolated N0 domain forms dimers that self-assemble into rings.

The protein localises to the cell outer membrane. Functionally, part of a type II secretion system (T2SS, formerly general secretion pathway, GSP) for the export of folded proteins across the outer membrane. This subunit forms the outer membrane channel. The sequence is that of Secretin GspD 2 (gspD2) from Escherichia coli O78:H11 (strain H10407 / ETEC).